A 175-amino-acid chain; its full sequence is Sialidase 85-1.3 (175 aa).

Belongs to the glycosyl hydrolase 33 family.

The enzyme catalyses Hydrolysis of alpha-(2-&gt;3)-, alpha-(2-&gt;6)-, alpha-(2-&gt;8)- glycosidic linkages of terminal sialic acid residues in oligosaccharides, glycoproteins, glycolipids, colominic acid and synthetic substrates.. Functionally, developmentally regulated neuraminidase implicated in parasite invasion of cells. May contribute to the pathology during T.cruzi infection by cleaving sialic acid from cells of the immune system. This Trypanosoma cruzi protein is Sialidase 85-1.3 (SA85-1.3).